We begin with the raw amino-acid sequence, 102 residues long: uncharacterized protein (102 aa).

Low complexity predominate over residues 1–13 (PSSSQALSVPSLS). Positions 1–24 (PSSSQALSVPSLSSEKKTASPTCV) are disordered.

This is an uncharacterized protein from Human cytomegalovirus (strain AD169) (HHV-5).